We begin with the raw amino-acid sequence, 1347 residues long: Protocadherin-11 X-linked (1347 aa).

A signal peptide spans 1–23 (MDLLSGTYIFAVLLACVVFHSGA). Residues 24–812 (QEKNYTIREE…VSSPTSDYVK (789 aa)) lie on the Extracellular side of the membrane. Cadherin domains lie at 26-139 (KNYT…APLF), 140-249 (PATV…HPVF), 250-355 (KETE…VPSI), 362-466 (NPVN…APVF), 467-570 (TQSF…SPVF), 571-673 (THNE…KPVF), and 677-795 (PSNY…APVT). 3 N-linked (GlcNAc...) asparagine glycosylation sites follow: Asn-27, Asn-48, and Asn-54. N-linked (GlcNAc...) asparagine glycosylation occurs at Asn-344. The N-linked (GlcNAc...) asparagine glycan is linked to Asn-553. Residue Asn-773 is glycosylated (N-linked (GlcNAc...) asparagine). The chain crosses the membrane as a helical span at residues 813–833 (ILVAAVAGTITVVVVIFITAV). Topologically, residues 834 to 1347 (VRCRQAPHLK…DSPVMEEHPL (514 aa)) are cytoplasmic. Disordered regions lie at residues 1057-1091 (LPEGSQESSSDGGLGDHDAGSLTSTSHGLPLGYPQ), 1097-1116 (RATPSNRTEGDGNSDPESTF), and 1325-1347 (TFTPRQQARPSRGDSPVMEEHPL).

The protein localises to the cell membrane. Potential calcium-dependent cell-adhesion protein. The sequence is that of Protocadherin-11 X-linked (PCDH11X) from Pan troglodytes (Chimpanzee).